Reading from the N-terminus, the 181-residue chain is Coatomer subunit zeta-3 (181 aa).

Belongs to the adaptor complexes small subunit family. Oligomeric complex that consists of at least the alpha, beta, beta', gamma, delta, epsilon and zeta subunits.

It localises to the cytoplasm. Its subcellular location is the golgi apparatus membrane. The protein resides in the cytoplasmic vesicle. It is found in the COPI-coated vesicle membrane. Its function is as follows. The coatomer is a cytosolic protein complex that binds to dilysine motifs and reversibly associates with Golgi non-clathrin-coated vesicles, which further mediate biosynthetic protein transport from the ER, via the Golgi up to the trans Golgi network. Coatomer complex is required for budding from Golgi membranes, and is essential for the retrograde Golgi-to-ER transport of dilysine-tagged proteins. The zeta subunit may be involved in regulating the coat assembly and, hence, the rate of biosynthetic protein transport due to its association-dissociation properties with the coatomer complex. The chain is Coatomer subunit zeta-3 from Arabidopsis thaliana (Mouse-ear cress).